We begin with the raw amino-acid sequence, 251 residues long: NADPH-dependent oxidoreductase (251 aa).

Belongs to the flavin oxidoreductase frp family. Requires FMN as cofactor.

In terms of biological role, reduces FMN, organic nitro compounds and disulfide DTNB. Involved in maintenance of the cellular redox state and the disulfide stress response. The sequence is that of NADPH-dependent oxidoreductase (nfrA) from Staphylococcus haemolyticus (strain JCSC1435).